The sequence spans 62 residues: Large ribosomal subunit protein uL30 (62 aa).

This sequence belongs to the universal ribosomal protein uL30 family. Part of the 50S ribosomal subunit.

This chain is Large ribosomal subunit protein uL30, found in Polynucleobacter asymbioticus (strain DSM 18221 / CIP 109841 / QLW-P1DMWA-1) (Polynucleobacter necessarius subsp. asymbioticus).